A 158-amino-acid chain; its full sequence is uncharacterized protein (158 aa).

Residues 13 to 110 (ESVGRALELV…WGDEYLPRPE (98 aa)) form the HTH hxlR-type domain.

This is an uncharacterized protein from Mycobacterium tuberculosis (strain ATCC 25618 / H37Rv).